Reading from the N-terminus, the 337-residue chain is Phosphate acyltransferase (337 aa).

The protein belongs to the PlsX family. In terms of assembly, homodimer. Probably interacts with PlsY.

It is found in the cytoplasm. The catalysed reaction is a fatty acyl-[ACP] + phosphate = an acyl phosphate + holo-[ACP]. It functions in the pathway lipid metabolism; phospholipid metabolism. Functionally, catalyzes the reversible formation of acyl-phosphate (acyl-PO(4)) from acyl-[acyl-carrier-protein] (acyl-ACP). This enzyme utilizes acyl-ACP as fatty acyl donor, but not acyl-CoA. This Listeria monocytogenes serotype 4b (strain F2365) protein is Phosphate acyltransferase.